The sequence spans 66 residues: MPKLKTRKAAAKRFRISGNGKAIRRKAFKNHLLQHKNATRRRRLSQPEVVHETDQERVKLMLPYSF.

It belongs to the bacterial ribosomal protein bL35 family.

The sequence is that of Large ribosomal subunit protein bL35 from Synechococcus sp. (strain ATCC 27144 / PCC 6301 / SAUG 1402/1) (Anacystis nidulans).